Here is a 286-residue protein sequence, read N- to C-terminus: DegV domain-containing protein SPs1668 (286 aa).

A DegV domain is found at 3–282 (FTIMTDSTAD…PNTLAVFVIG (280 aa)). T62 and S94 together coordinate hexadecanoate.

Its function is as follows. May bind long-chain fatty acids, such as palmitate, and may play a role in lipid transport or fatty acid metabolism. This chain is DegV domain-containing protein SPs1668, found in Streptococcus pyogenes serotype M3 (strain SSI-1).